The sequence spans 130 residues: Phosphoribosyl-AMP cyclohydrolase (130 aa).

Asp78 serves as a coordination point for Mg(2+). Cys79 contributes to the Zn(2+) binding site. Residues Asp80 and Asp82 each coordinate Mg(2+). Residues Cys96 and Cys103 each coordinate Zn(2+).

This sequence belongs to the PRA-CH family. As to quaternary structure, homodimer. Mg(2+) is required as a cofactor. It depends on Zn(2+) as a cofactor.

Its subcellular location is the cytoplasm. It catalyses the reaction 1-(5-phospho-beta-D-ribosyl)-5'-AMP + H2O = 1-(5-phospho-beta-D-ribosyl)-5-[(5-phospho-beta-D-ribosylamino)methylideneamino]imidazole-4-carboxamide. It functions in the pathway amino-acid biosynthesis; L-histidine biosynthesis; L-histidine from 5-phospho-alpha-D-ribose 1-diphosphate: step 3/9. In terms of biological role, catalyzes the hydrolysis of the adenine ring of phosphoribosyl-AMP. The protein is Phosphoribosyl-AMP cyclohydrolase of Methylobacillus flagellatus (strain ATCC 51484 / DSM 6875 / VKM B-1610 / KT).